We begin with the raw amino-acid sequence, 456 residues long: RuvB-like helicase 1 (456 aa).

71–78 (GGAGTGKT) contributes to the ATP binding site.

The protein belongs to the RuvB family. In terms of assembly, may form heterododecamers with RVB2. Component of the SWR1 chromatin remodeling complex, the INO80 chromatin remodeling complex, and of the R2TP complex.

It is found in the nucleus. It catalyses the reaction ATP + H2O = ADP + phosphate + H(+). Its function is as follows. DNA helicase which participates in several chromatin remodeling complexes, including the SWR1 and the INO80 complexes. The SWR1 complex mediates the ATP-dependent exchange of histone H2A for the H2A variant HZT1 leading to transcriptional regulation of selected genes by chromatin remodeling. The INO80 complex remodels chromatin by shifting nucleosomes and is involved in DNA repair. Also involved in pre-rRNA processing. The chain is RuvB-like helicase 1 (rvb1) from Schizosaccharomyces pombe (strain 972 / ATCC 24843) (Fission yeast).